A 185-amino-acid polypeptide reads, in one-letter code: Probable calcium-binding protein CML10 (185 aa).

The segment at 1-41 is disordered; it reads MVKIKMPALFRRRSGSKSPPLPQADPASGGGSPAPTPEEEM. EF-hand domains lie at 36-71, 72-107, 110-145, and 146-181; these read TPEEEMERVFRKFDANGDGRISRSELGALFESLGHA, ATDDELARMMAEADADGDGFISLDEFAALNATASGD, AVEEDLRHAFRVFDADGNGTISAAELARVLHGLGEK, and ATVQQCRRMIEGVDQNGDGLISFEEFKVMMAGGGSF. Positions 49, 51, 53, 55, 60, 85, 87, 89, 96, 123, 125, 127, 129, 134, 159, 161, 163, and 170 each coordinate Ca(2+).

Its function is as follows. Potential calcium sensor. The sequence is that of Probable calcium-binding protein CML10 (CML10) from Oryza sativa subsp. japonica (Rice).